The sequence spans 409 residues: Polyadenylate-binding protein RBP45 (409 aa).

Residues 1–83 (MMPQSGVAQP…PSPTGNPNEV (83 aa)) are disordered. A compositionally biased stretch (low complexity) spans 19–81 (QHQYQQQAPP…PNPSPTGNPN (63 aa)). 2 RRM domains span residues 84-164 (RSLW…WASL) and 176-255 (HTIF…PAAN). The disordered stretch occupies residues 251 to 280 (GPAANKKPVGTPQKATYQNPQATQGESDPN). A compositionally biased stretch (polar residues) spans 263 to 280 (QKATYQNPQATQGESDPN). An RRM 3 domain is found at 282–354 (TTIFVGGLDP…QSIRLSWGRS (73 aa)).

It belongs to the polyadenylate-binding RBP45 family. Interacts with the poly(A) tail of mRNA in nucleus. As to expression, constitutively expressed in leaves, roots, and stems.

The protein resides in the nucleus. Heterogeneous nuclear ribonucleoprotein (hnRNP)-protein binding the poly(A) tail of mRNA and probably involved in some steps of pre-mRNA maturation. In Nicotiana plumbaginifolia (Leadwort-leaved tobacco), this protein is Polyadenylate-binding protein RBP45 (RBP45).